The chain runs to 208 residues: Uracil phosphoribosyltransferase (208 aa).

5-phospho-alpha-D-ribose 1-diphosphate contacts are provided by residues Arg78, Arg103, and 130-138 (DPMLATGGS). Residues Ile193 and 198–200 (GDA) each bind uracil. Residue Asp199 coordinates 5-phospho-alpha-D-ribose 1-diphosphate.

Belongs to the UPRTase family. It depends on Mg(2+) as a cofactor.

It catalyses the reaction UMP + diphosphate = 5-phospho-alpha-D-ribose 1-diphosphate + uracil. It participates in pyrimidine metabolism; UMP biosynthesis via salvage pathway; UMP from uracil: step 1/1. Allosterically activated by GTP. Functionally, catalyzes the conversion of uracil and 5-phospho-alpha-D-ribose 1-diphosphate (PRPP) to UMP and diphosphate. The chain is Uracil phosphoribosyltransferase from Proteus mirabilis (strain HI4320).